Consider the following 339-residue polypeptide: Phosphate acyltransferase (339 aa).

This sequence belongs to the PlsX family. As to quaternary structure, homodimer. Probably interacts with PlsY.

It is found in the cytoplasm. The enzyme catalyses a fatty acyl-[ACP] + phosphate = an acyl phosphate + holo-[ACP]. Its pathway is lipid metabolism; phospholipid metabolism. Catalyzes the reversible formation of acyl-phosphate (acyl-PO(4)) from acyl-[acyl-carrier-protein] (acyl-ACP). This enzyme utilizes acyl-ACP as fatty acyl donor, but not acyl-CoA. The polypeptide is Phosphate acyltransferase (Methylococcus capsulatus (strain ATCC 33009 / NCIMB 11132 / Bath)).